The chain runs to 880 residues: Alanine--tRNA ligase (880 aa).

His-566, His-570, Cys-668, and His-672 together coordinate Zn(2+).

This sequence belongs to the class-II aminoacyl-tRNA synthetase family. The cofactor is Zn(2+).

The protein resides in the cytoplasm. It catalyses the reaction tRNA(Ala) + L-alanine + ATP = L-alanyl-tRNA(Ala) + AMP + diphosphate. Functionally, catalyzes the attachment of alanine to tRNA(Ala) in a two-step reaction: alanine is first activated by ATP to form Ala-AMP and then transferred to the acceptor end of tRNA(Ala). Also edits incorrectly charged Ser-tRNA(Ala) and Gly-tRNA(Ala) via its editing domain. In Nostoc punctiforme (strain ATCC 29133 / PCC 73102), this protein is Alanine--tRNA ligase.